The sequence spans 103 residues: Hexon-interlacing protein (103 aa).

Residues 72-99 (LDELKIQVAAMQNSVTAIQREVNDLKQR) are a coiled coil.

It belongs to the adenoviridae hexon-interlacing protein family. As to quaternary structure, homotrimer. Interacts with hexon protein; this interaction tethers the hexons together. Self-interacts with adjacent proteins. Interacts with kinesin light chain KLC1; this interaction leads to capsid disruption at the nuclear pore complex during virus entry into host cell.

It is found in the virion. The protein localises to the host nucleus. Its function is as follows. Structural component of the virion that acts as a cement protein on the capsid exterior and forms triskelion structures consisting of three molecules that stabilize three hexon trimers at the center of each icosahedral facet and fixes the peripentonal hexons. Dispensable for assembly. During virus entry, recruits the anterograde motor kinesin-1 to the capsid docked at the nuclear pore complex thereby subjecting the docked capsid to a pulling force. The resulting tension leads to capsid disruption, dispersion of capsid fragments toward cell periphery and eventually viral DNA entry into the host nucleus. This chain is Hexon-interlacing protein, found in Canis lupus familiaris (Dog).